The primary structure comprises 77 residues: Acyl carrier protein (77 aa).

The region spanning 2–77 (AEVLEKVTKI…DAVKYIEANA (76 aa)) is the Carrier domain. An O-(pantetheine 4'-phosphoryl)serine modification is found at S37.

The protein belongs to the acyl carrier protein (ACP) family. In terms of processing, 4'-phosphopantetheine is transferred from CoA to a specific serine of apo-ACP by AcpS. This modification is essential for activity because fatty acids are bound in thioester linkage to the sulfhydryl of the prosthetic group.

The protein resides in the cytoplasm. It participates in lipid metabolism; fatty acid biosynthesis. In terms of biological role, carrier of the growing fatty acid chain in fatty acid biosynthesis. In Listeria innocua serovar 6a (strain ATCC BAA-680 / CLIP 11262), this protein is Acyl carrier protein.